The chain runs to 342 residues: Fructose-1,6-bisphosphatase class 1 (342 aa).

Positions 97, 119, 121, and 122 each coordinate Mg(2+). Substrate is bound by residues 122-125 (DGSS), asparagine 215, tyrosine 247, and lysine 280. A Mg(2+)-binding site is contributed by glutamate 286.

The protein belongs to the FBPase class 1 family. Homotetramer. Mg(2+) is required as a cofactor.

It is found in the cytoplasm. The catalysed reaction is beta-D-fructose 1,6-bisphosphate + H2O = beta-D-fructose 6-phosphate + phosphate. It participates in carbohydrate biosynthesis; gluconeogenesis. The chain is Fructose-1,6-bisphosphatase class 1 from Leptospira interrogans serogroup Icterohaemorrhagiae serovar copenhageni (strain Fiocruz L1-130).